The primary structure comprises 226 residues: ATP synthase F(0) complex subunit a (226 aa).

6 helical membrane passes run 6–26 (FASF…IIMF), 68–88 (WSLM…LGLL), 97–117 (QLSM…ITGF), 138–158 (IPML…ALAV), 164–184 (ITAG…LTSI), and 189–209 (AILT…VALI).

The protein belongs to the ATPase A chain family. In terms of assembly, component of the ATP synthase complex composed at least of ATP5F1A/subunit alpha, ATP5F1B/subunit beta, ATP5MC1/subunit c (homooctomer), MT-ATP6/subunit a, MT-ATP8/subunit 8, ATP5ME/subunit e, ATP5MF/subunit f, ATP5MG/subunit g, ATP5MK/subunit k, ATP5MJ/subunit j, ATP5F1C/subunit gamma, ATP5F1D/subunit delta, ATP5F1E/subunit epsilon, ATP5PF/subunit F6, ATP5PB/subunit b, ATP5PD/subunit d, ATP5PO/subunit OSCP. ATP synthase complex consists of a soluble F(1) head domain (subunits alpha(3) and beta(3)) - the catalytic core - and a membrane F(0) domain - the membrane proton channel (subunits c, a, 8, e, f, g, k and j). These two domains are linked by a central stalk (subunits gamma, delta, and epsilon) rotating inside the F1 region and a stationary peripheral stalk (subunits F6, b, d, and OSCP). Interacts with DNAJC30; interaction is direct.

The protein resides in the mitochondrion inner membrane. The enzyme catalyses H(+)(in) = H(+)(out). In terms of biological role, subunit a, of the mitochondrial membrane ATP synthase complex (F(1)F(0) ATP synthase or Complex V) that produces ATP from ADP in the presence of a proton gradient across the membrane which is generated by electron transport complexes of the respiratory chain. ATP synthase complex consist of a soluble F(1) head domain - the catalytic core - and a membrane F(1) domain - the membrane proton channel. These two domains are linked by a central stalk rotating inside the F(1) region and a stationary peripheral stalk. During catalysis, ATP synthesis in the catalytic domain of F(1) is coupled via a rotary mechanism of the central stalk subunits to proton translocation. With the subunit c (ATP5MC1), forms the proton-conducting channel in the F(0) domain, that contains two crucial half-channels (inlet and outlet) that facilitate proton movement from the mitochondrial intermembrane space (IMS) into the matrix. Protons are taken up via the inlet half-channel and released through the outlet half-channel, following a Grotthuss mechanism. This Ictidomys tridecemlineatus (Thirteen-lined ground squirrel) protein is ATP synthase F(0) complex subunit a.